Reading from the N-terminus, the 550-residue chain is Chaperonin GroEL (550 aa).

ATP is bound by residues 30-33 (TLGP), lysine 51, 87-91 (DGTTT), glycine 415, and aspartate 496.

Belongs to the chaperonin (HSP60) family. Forms a cylinder of 14 subunits composed of two heptameric rings stacked back-to-back. Interacts with the co-chaperonin GroES.

Its subcellular location is the cytoplasm. The catalysed reaction is ATP + H2O + a folded polypeptide = ADP + phosphate + an unfolded polypeptide.. Functionally, together with its co-chaperonin GroES, plays an essential role in assisting protein folding. The GroEL-GroES system forms a nano-cage that allows encapsulation of the non-native substrate proteins and provides a physical environment optimized to promote and accelerate protein folding. The polypeptide is Chaperonin GroEL (Rickettsia prowazekii (strain Madrid E)).